A 69-amino-acid chain; its full sequence is Putative membrane protein insertion efficiency factor (69 aa).

Belongs to the UPF0161 family.

The protein resides in the cell inner membrane. In terms of biological role, could be involved in insertion of integral membrane proteins into the membrane. The sequence is that of Putative membrane protein insertion efficiency factor from Syntrophotalea carbinolica (strain DSM 2380 / NBRC 103641 / GraBd1) (Pelobacter carbinolicus).